The chain runs to 281 residues: 3-hydroxyanthranilate 3,4-dioxygenase (281 aa).

Residues 1–162 form a domain A (catalytic) region; sequence MAGVTAIEIP…SNEFKTGKPG (162 aa). R45 is an O2 binding site. 3 residues coordinate Fe cation: H49, E55, and H93. E55 provides a ligand contact to substrate. Substrate is bound by residues R97 and E107. Positions 163 to 179 are linker; that stretch reads KGTFACNAPYEARWTDL. The interval 180 to 281 is domain B; it reads PVPINRKEFI…GFAITIRMPG (102 aa).

Belongs to the 3-HAO family. The cofactor is Fe(2+).

It is found in the cytoplasm. The enzyme catalyses 3-hydroxyanthranilate + O2 = (2Z,4Z)-2-amino-3-carboxymuconate 6-semialdehyde. Its pathway is cofactor biosynthesis; NAD(+) biosynthesis; quinolinate from L-kynurenine: step 3/3. Its function is as follows. Catalyzes the oxidative ring opening of 3-hydroxyanthranilate to 2-amino-3-carboxymuconate semialdehyde, which spontaneously cyclizes to quinolinate. This chain is 3-hydroxyanthranilate 3,4-dioxygenase (haao-1), found in Caenorhabditis briggsae.